Consider the following 98-residue polypeptide: Pancreatic polypeptide prohormone (98 aa).

An N-terminal signal peptide occupies residues 1–29 (MAVAYYCLSLFLLSTWVALLLQPLQGAWG). Residue Tyr-65 is modified to Tyrosine amide.

This sequence belongs to the NPY family. No icosapeptide-like peptide is cleaved from the C-terminal.

Its subcellular location is the secreted. Hormone secreted by pancreatic cells that acts as a regulator of pancreatic and gastrointestinal functions probably by signaling through the G protein-coupled receptor NPY4R2. This Rattus norvegicus (Rat) protein is Pancreatic polypeptide prohormone (Ppy).